Consider the following 382-residue polypeptide: Chaperone protein DnaJ (382 aa).

One can recognise a J domain in the interval 5 to 70 (DFYEILGVPK…QKRAAYDQYG (66 aa)). The CR-type zinc-finger motif lies at 137 to 215 (GVTKEIRIPT…CHGHGRVEKT (79 aa)). Zn(2+) contacts are provided by Cys-150, Cys-153, Cys-167, Cys-170, Cys-189, Cys-192, Cys-203, and Cys-206. CXXCXGXG motif repeat units lie at residues 150 to 157 (CDICHGSG), 167 to 174 (CPTCHGSG), 189 to 196 (CPHCHGRG), and 203 to 210 (CNKCHGHG).

The protein belongs to the DnaJ family. As to quaternary structure, homodimer. The cofactor is Zn(2+).

The protein resides in the cytoplasm. Functionally, participates actively in the response to hyperosmotic and heat shock by preventing the aggregation of stress-denatured proteins and by disaggregating proteins, also in an autonomous, DnaK-independent fashion. Unfolded proteins bind initially to DnaJ; upon interaction with the DnaJ-bound protein, DnaK hydrolyzes its bound ATP, resulting in the formation of a stable complex. GrpE releases ADP from DnaK; ATP binding to DnaK triggers the release of the substrate protein, thus completing the reaction cycle. Several rounds of ATP-dependent interactions between DnaJ, DnaK and GrpE are required for fully efficient folding. Also involved, together with DnaK and GrpE, in the DNA replication of plasmids through activation of initiation proteins. The sequence is that of Chaperone protein DnaJ from Enterobacter sp. (strain 638).